A 342-amino-acid chain; its full sequence is Tryptophan--tRNA ligase (342 aa).

Residues 19–21 (QPS) and 27–28 (GN) contribute to the ATP site. The 'HIGH' region motif lies at 20–28 (PSGELTIGN). Asp143 serves as a coordination point for L-tryptophan. Residues 155–157 (GED), Val194, and 203–207 (KMSKS) each bind ATP. The 'KMSKS' region signature appears at 203–207 (KMSKS).

This sequence belongs to the class-I aminoacyl-tRNA synthetase family. In terms of assembly, homodimer.

It localises to the cytoplasm. The enzyme catalyses tRNA(Trp) + L-tryptophan + ATP = L-tryptophyl-tRNA(Trp) + AMP + diphosphate + H(+). Its function is as follows. Catalyzes the attachment of tryptophan to tRNA(Trp). The sequence is that of Tryptophan--tRNA ligase from Yersinia pestis.